Here is a 290-residue protein sequence, read N- to C-terminus: MSALIARQAPSAAERLADLAVQALVDEADLSPKPGLVDRRGSGAHSDLHLGLMHASAQSLWPAFAAMADAARSEGRVSQALRETLGQLGRDGEAEMLRVTAGVNTHRGAIWALGLLSAAAMLESGASAGGIAASAAALARLDDPAAPHNPDSHGARVCRRYGVLGAREQAQHGFPAVIEHGLPQLLASRRAGAGEQNARLDALLAIMSSLTDTCVLHRAGLEGLTRMQAGARAVLEAGGCASLAGRRRLRALEGEMLSLRASPGGAADLLAATLFLDRLTPAASAPIGSY.

It belongs to the CitG/MdcB family.

The catalysed reaction is 3'-dephospho-CoA + ATP = 2'-(5''-triphospho-alpha-D-ribosyl)-3'-dephospho-CoA + adenine. Functionally, involved in the formation of 2-(5''-phosphoribosyl)-3'-dephosphocoenzyme-A, the prosthetic group of the acyl-carrier protein of the malonate decarboxylase. The sequence is that of Probable 2-(5''-triphosphoribosyl)-3'-dephosphocoenzyme-A synthase from Stutzerimonas stutzeri (strain A1501) (Pseudomonas stutzeri).